Reading from the N-terminus, the 413-residue chain is Putative competence-damage inducible protein (413 aa).

The protein belongs to the CinA family.

The polypeptide is Putative competence-damage inducible protein (Halothermothrix orenii (strain H 168 / OCM 544 / DSM 9562)).